The chain runs to 335 residues: Ketol-acid reductoisomerase (NADP(+)) 2 (335 aa).

One can recognise a KARI N-terminal Rossmann domain in the interval 1-180 (MKTYYEQDAN…GCTRAGVIET (180 aa)). NADP(+) contacts are provided by residues 24–27 (YGSQ), arginine 47, serine 51, and 81–84 (DEQQ). Residue histidine 106 is part of the active site. Glycine 132 serves as a coordination point for NADP(+). In terms of domain architecture, KARI C-terminal knotted spans 181-326 (TFQEETETDL…EELREMMSWI (146 aa)). Mg(2+) contacts are provided by aspartate 189, glutamate 193, glutamate 225, and glutamate 229. A substrate-binding site is contributed by serine 250.

This sequence belongs to the ketol-acid reductoisomerase family. The cofactor is Mg(2+).

The catalysed reaction is (2R)-2,3-dihydroxy-3-methylbutanoate + NADP(+) = (2S)-2-acetolactate + NADPH + H(+). It carries out the reaction (2R,3R)-2,3-dihydroxy-3-methylpentanoate + NADP(+) = (S)-2-ethyl-2-hydroxy-3-oxobutanoate + NADPH + H(+). Its pathway is amino-acid biosynthesis; L-isoleucine biosynthesis; L-isoleucine from 2-oxobutanoate: step 2/4. It functions in the pathway amino-acid biosynthesis; L-valine biosynthesis; L-valine from pyruvate: step 2/4. Involved in the biosynthesis of branched-chain amino acids (BCAA). Catalyzes an alkyl-migration followed by a ketol-acid reduction of (S)-2-acetolactate (S2AL) to yield (R)-2,3-dihydroxy-isovalerate. In the isomerase reaction, S2AL is rearranged via a Mg-dependent methyl migration to produce 3-hydroxy-3-methyl-2-ketobutyrate (HMKB). In the reductase reaction, this 2-ketoacid undergoes a metal-dependent reduction by NADPH to yield (R)-2,3-dihydroxy-isovalerate. The chain is Ketol-acid reductoisomerase (NADP(+)) 2 from Bacillus anthracis.